The sequence spans 334 residues: Ethanol acetyltransferase 1 (334 aa).

The transit peptide at 1–16 (MFASNVVVLNKRSIRF) directs the protein to the mitochondrion. Active-site charge relay system residues include Ser-124, Asp-148, and His-296.

This sequence belongs to the AB hydrolase superfamily.

It is found in the mitochondrion. It catalyses the reaction ethanol + acetyl-CoA = ethyl acetate + CoA. The catalysed reaction is acetyl-CoA + H2O = acetate + CoA + H(+). It carries out the reaction ethyl acetate + H2O = ethanol + acetate + H(+). Alcohol acetyltransferase that catalyzes the synthesis of ethyl acetate from ethanol and acetyl-CoA. Can also function as a thioesterase by hydrolyzing acetyl-CoA in the absence of ethanol, as well as esterase hydrolyzing ethyl acetate. This is Ethanol acetyltransferase 1 (EAT1) from Hanseniaspora uvarum (Yeast).